The chain runs to 367 residues: Serine O-succinyltransferase (367 aa).

The AB hydrolase-1 domain maps to 41–351 (NAVLILTGLS…SPQGHDAFLV (311 aa)). The interval 48–51 (GLSP) is important for substrate specificity. The active-site Nucleophile is S146. R215 contacts substrate. Residues D313 and H346 contribute to the active site. Substrate is bound at residue D347.

This sequence belongs to the AB hydrolase superfamily. MetX family. In terms of assembly, homodimer.

The protein localises to the cytoplasm. It carries out the reaction succinyl-CoA + L-serine = O-succinyl-L-serine + CoA. The enzyme catalyses L-homoserine + succinyl-CoA = O-succinyl-L-homoserine + CoA. It participates in amino-acid biosynthesis; L-cysteine biosynthesis; L-cysteine from L-serine: step 1/2. Its function is as follows. Transfers a succinyl group from succinyl-CoA to L-serine, forming succinyl-L-serine. In vitro, also has homoserine succinyl transferase activity. This is Serine O-succinyltransferase from Frateuria aurantia (strain ATCC 33424 / DSM 6220 / KCTC 2777 / LMG 1558 / NBRC 3245 / NCIMB 13370) (Acetobacter aurantius).